The following is a 490-amino-acid chain: RNA-binding protein P (490 aa).

The segment at 1-112 is disordered; the sequence is MGKKRKLDSK…EEEEAAERDA (112 aa). The segment covering 13–36 has biased composition (low complexity); sequence AAARSAAARAAAAAAAAAAAAAVA. The span at 74 to 108 shows a compositional bias: acidic residues; sequence GGEEEEVEEVEVEEEVEVDEDEDGEGEGEEEEEAA. RRM domains are found at residues 156–233 and 267–343; these read RKIF…LASV and RKIF…QKAI.

In terms of assembly, forms homodimers. Interacts with RBP-L and RBP-208. Interacts with NSF.

It localises to the nucleus. Its subcellular location is the cytoplasm. Its function is as follows. RNA-binding protein that binds to a cis-localization element or zipcode, within the 5'-CDS of prolamine RNA. Binds strongly to glutelin mRNA, particularly to 3'-UTR and zipcode RNA. Recognizes and binds to glutelin zipcode RNA, which is required for proper mRNA localization to cisternal endoplasmic reticulum. Exhibits strong binding activity to a glutelin intron sequence and may participate in mRNA splicing. Required for the correct localization of glutelin and prolamine mRNA in endosperm cells during grain development. RBP-P and RBP-L form a quaternary complex with the membrane trafficking factors NSF and RAB5A. This quaternay complex carries glutelin mRNAs for active transport on endosomes to the cortical endoplasmic reticulum membrane, and enables endosome-mediated glutelin mRNA transport in endosperm cells. The chain is RNA-binding protein P from Oryza sativa subsp. japonica (Rice).